A 332-amino-acid polypeptide reads, in one-letter code: F-box/SPRY domain-containing protein 1 (332 aa).

Residues 1-82 form a disordered region; that stretch reads MAENDGETIV…RSPRRPEVSA (82 aa). Polar residues-rich tracts occupy residues 15 to 28 and 49 to 64; these read CNLT…SSGL and NPSS…QLTP. In terms of domain architecture, F-box spans 79-127; sequence EVSASRLPLKVLNQIFQYLPLKDLRSAMLTCHSWNNALSMEDSDIWQYL. A B30.2/SPRY domain is found at 138-330; sequence SDPFLLAELG…VTMVYVGSPQ (193 aa).

It belongs to the FBXO45/Fsn family. As to quaternary structure, component of an SCF (SKP1-CUL1-F-box protein) E3 ubiquitin ligase complex composed of cul-1, fsn-1, rpm-1 and skr-1. Interacts (via SPRY domain) with scd-2 (via cytoplasmic domain). Interacts (via SPRY domain) with convertase egl-3 (via C-terminus). Expressed in GABAergic neuromuscular junctions (NMJs).

The protein localises to the synapse. It functions in the pathway protein modification; protein ubiquitination. Component of a SCF (SKP1-CUL1-F-box protein) E3 ubiquitin ligase complex which is required for the restriction and/or maturation of synapses in GABAergic neuromuscular junction (NMJ) presynaptic neurons. Promotes NRJ synapse development and synaptic transmission by negatively regulating the daf-2/InsR pathway in muscles. By targeting convertase egl-3 for degradation, negatively modulates insulin-like protein ins-4 and ins-6 processing. May stabilize synapse formation by promoting the down-regulation of scd-2. Regulates axon termination in PLM and ALM neurons. The protein is F-box/SPRY domain-containing protein 1 (fsn-1) of Caenorhabditis elegans.